The following is a 1191-amino-acid chain: Phosphatidylinositol 3,4,5-trisphosphate 5-phosphatase 1 (1191 aa).

The SH2 domain occupies 8 to 104 (WNHGNITRSK…GLVTHLQYPV (97 aa)). Positions 122 to 148 (SVMSPPELPPRNIPMSAGPSEAKDLPL) are disordered. Positions 127-132 (PELPPR) match the SH3-binding 1 motif. Residue serine 246 is modified to Phosphoserine. The NPXY motif 1 motif lies at 915 to 918 (NPNY). Phosphotyrosine is present on tyrosine 918. Phosphoserine is present on serine 935. Tyrosine 945 is modified (phosphotyrosine). Disordered regions lie at residues 947–994 (QLPK…EARP) and 1021–1191 (YGSV…TAMQ). Pro residues predominate over residues 962-972 (PPTPPSQPPLS). Threonine 964 bears the Phosphothreonine mark. 2 positions are modified to phosphoserine: serine 967 and serine 972. Positions 970 to 975 (PLSPKK) match the SH3-binding 2 motif. Residues 1015–1029 (MFENPLYGSVSSFPK) form an interaction with DAB2 region. The NPXY motif 2 signature appears at 1018–1021 (NPLY). Tyrosine 1021 is subject to Phosphotyrosine. Basic and acidic residues predominate over residues 1032-1046 (PRKEQESPKMLRKEP). Positions 1039 to 1050 (PKMLRKEPPPCP) match the SH3-binding 3 motif. The span at 1141-1150 (IPAPRPPLPV) shows a compositional bias: pro residues. Residues 1162 to 1184 (KGRDYRDNTELPHHGKHRQEEGL) show a composition bias toward basic and acidic residues.

The protein belongs to the inositol 1,4,5-trisphosphate 5-phosphatase family. In terms of assembly, interacts with tyrosine phosphorylated form of SHC1. Interacts with tyrosine phosphorylated form of DOK1. Interacts with tyrosine phosphorylated form of DOK3. Interacts with tyrosine phosphorylated form of SLAMF1/CD150. Interacts with PTPN11/SHP-2 in response to IL-3. Interacts with receptor EPOR. Interacts with receptors MS4A2/FCER1B and FCER1G. Interacts with receptors FCGR2B and FCGR3. Interacts with receptor FCGR2A, leading to regulate gene expression during the phagocytic process. Interacts with GRB2. Interacts with PLCG1. Interacts with tyrosine kinases SRC and TEC. Interacts with CRKL. Interacts with c-Met/MET. Interacts with MILR1 (tyrosine-phosphorylated). Isoform 5 interacts with IL6ST/gp130. Can weakly interact (via NPXY motif 2) with DAB2 (via PID domain); the interaction is impaired by tyrosine phosphorylation of the NPXY motif. Interacts (via SH2 domain) with tyrosine phosphorylated KLRC1 (via ITIM). Interacts with MPL/TPOR. In terms of processing, tyrosine phosphorylated by the members of the SRC family after exposure to a diverse array of extracellular stimuli such as cytokines, growth factors, antibodies, chemokines, integrin ligands and hypertonic and oxidative stress. Phosphorylated upon IgG receptor FCGR2B-binding. Specifically expressed in immune and hematopoietic cells. Levels vary considerably within this compartment. Lost during erythropoiesis when erythroid cells become Ter119+. Increases substantially with T-cell maturation and when resting B-cells are activated. Also present in mature granulocytes, monocyte/macrophages, mast cells and platelets. Isoform 5 is the only form expressed in embryonic stem (ES) cells and is coexpressed with other isoforms in hematopoietic stem cells, and disappears with differentiation.

It localises to the cytoplasm. The protein localises to the cell membrane. Its subcellular location is the membrane raft. The protein resides in the cytoskeleton. It carries out the reaction a 1,2-diacyl-sn-glycero-3-phospho-(1D-myo-inositol-3,4,5-trisphosphate) + H2O = a 1,2-diacyl-sn-glycero-3-phospho-(1D-myo-inositol-3,4-bisphosphate) + phosphate. The enzyme catalyses a 1,2-diacyl-sn-glycero-3-phospho-(1D-myo-inositol-4,5-bisphosphate) + H2O = a 1,2-diacyl-sn-glycero-3-phospho-(1D-myo-inositol 4-phosphate) + phosphate. The catalysed reaction is 1D-myo-inositol 1,3,4,5-tetrakisphosphate + H2O = 1D-myo-inositol 1,3,4-trisphosphate + phosphate. Activated upon translocation to the sites of synthesis of PtdIns(3,4,5)P3 in the membrane. Functionally, phosphatidylinositol (PtdIns) phosphatase that specifically hydrolyzes the 5-phosphate of phosphatidylinositol-3,4,5-trisphosphate (PtdIns(3,4,5)P3) to produce PtdIns(3,4)P2, thereby negatively regulating the PI3K (phosphoinositide 3-kinase) pathways. Also able to hydrolyze the 5-phosphate of phosphatidylinositol-4,5-bisphosphate (PtdIns(4,5)P3) and inositol 1,3,4,5-tetrakisphosphate. Acts as a negative regulator of B-cell antigen receptor signaling. Mediates signaling from the FC-gamma-RIIB receptor (FCGR2B), playing a central role in terminating signal transduction from activating immune/hematopoietic cell receptor systems. Acts as a negative regulator of myeloid cell proliferation/survival and chemotaxis, mast cell degranulation, immune cells homeostasis, integrin alpha-IIb/beta-3 signaling in platelets and JNK signaling in B-cells. Regulates proliferation of osteoclast precursors, macrophage programming, phagocytosis and activation and is required for endotoxin tolerance. Involved in the control of cell-cell junctions, CD32a signaling in neutrophils and modulation of EGF-induced phospholipase C activity. Key regulator of neutrophil migration, by governing the formation of the leading edge and polarization required for chemotaxis. Modulates FCGR3/CD16-mediated cytotoxicity in NK cells. Mediates the activin/TGF-beta-induced apoptosis through its Smad-dependent expression. This is Phosphatidylinositol 3,4,5-trisphosphate 5-phosphatase 1 (Inpp5d) from Mus musculus (Mouse).